The primary structure comprises 309 residues: Homoserine O-succinyltransferase (309 aa).

The Acyl-thioester intermediate role is filled by Cys-142. Residues Lys-163 and Ser-192 each coordinate substrate. The active-site Proton acceptor is His-235. The active site involves Glu-237. Arg-249 lines the substrate pocket.

It belongs to the MetA family. As to quaternary structure, homodimer.

Its subcellular location is the cytoplasm. The catalysed reaction is L-homoserine + succinyl-CoA = O-succinyl-L-homoserine + CoA. The protein operates within amino-acid biosynthesis; L-methionine biosynthesis via de novo pathway; O-succinyl-L-homoserine from L-homoserine: step 1/1. Functionally, transfers a succinyl group from succinyl-CoA to L-homoserine, forming succinyl-L-homoserine. This Shigella sonnei (strain Ss046) protein is Homoserine O-succinyltransferase.